We begin with the raw amino-acid sequence, 100 residues long: Urease subunit gamma (100 aa).

It belongs to the urease gamma subunit family. As to quaternary structure, heterotrimer of UreA (gamma), UreB (beta) and UreC (alpha) subunits. Three heterotrimers associate to form the active enzyme.

Its subcellular location is the cytoplasm. It carries out the reaction urea + 2 H2O + H(+) = hydrogencarbonate + 2 NH4(+). It participates in nitrogen metabolism; urea degradation; CO(2) and NH(3) from urea (urease route): step 1/1. The sequence is that of Urease subunit gamma from Methylobacillus flagellatus (strain ATCC 51484 / DSM 6875 / VKM B-1610 / KT).